Reading from the N-terminus, the 163-residue chain is SsrA-binding protein (163 aa).

Residues 135–156 are compositionally biased toward basic and acidic residues; it reads GKKEHDKRDDTKEREWKIEKSR. Residues 135–163 form a disordered region; sequence GKKEHDKRDDTKEREWKIEKSRTMKHAAR.

The protein belongs to the SmpB family.

The protein localises to the cytoplasm. Functionally, required for rescue of stalled ribosomes mediated by trans-translation. Binds to transfer-messenger RNA (tmRNA), required for stable association of tmRNA with ribosomes. tmRNA and SmpB together mimic tRNA shape, replacing the anticodon stem-loop with SmpB. tmRNA is encoded by the ssrA gene; the 2 termini fold to resemble tRNA(Ala) and it encodes a 'tag peptide', a short internal open reading frame. During trans-translation Ala-aminoacylated tmRNA acts like a tRNA, entering the A-site of stalled ribosomes, displacing the stalled mRNA. The ribosome then switches to translate the ORF on the tmRNA; the nascent peptide is terminated with the 'tag peptide' encoded by the tmRNA and targeted for degradation. The ribosome is freed to recommence translation, which seems to be the essential function of trans-translation. The sequence is that of SsrA-binding protein from Shewanella loihica (strain ATCC BAA-1088 / PV-4).